The following is a 274-amino-acid chain: Photosystem II extrinsic protein O (274 aa).

A signal peptide spans 1–28 (MRFRPSIVALLSVCFGLLTFLYSGSAFA).

This sequence belongs to the PsbO family. PSII is composed of 1 copy each of membrane proteins PsbA, PsbB, PsbC, PsbD, PsbE, PsbF, PsbH, PsbI, PsbJ, PsbK, PsbL, PsbM, PsbT, PsbX, PsbY, PsbZ, Psb30/Ycf12, peripheral proteins PsbO, CyanoQ (PsbQ), PsbU, PsbV and a large number of cofactors. It forms dimeric complexes. Contacts PsbQ.

Its subcellular location is the cellular thylakoid membrane. Its function is as follows. One of the extrinsic, lumenal subunits of photosystem II (PSII), which stabilize and protect the oxygen-evolving complex. PSII is a light-driven water plastoquinone oxidoreductase, using light energy to abstract electrons from H(2)O, generating a proton gradient subsequently used for ATP formation. Required for dimerization of PSII and for binding of PsbQ to PSII. The sequence is that of Photosystem II extrinsic protein O from Synechocystis sp. (strain ATCC 27184 / PCC 6803 / Kazusa).